Consider the following 143-residue polypeptide: Large ribosomal subunit protein uL15 (143 aa).

The disordered stretch occupies residues 1–59 (MELNTITPGQGAKHAKRRVGRGIGSGLGKTAGRGHKGQKSRSGGYHKVGFEGGQMPMQR). The span at 21–31 (RGIGSGLGKTA) shows a compositional bias: gly residues.

Belongs to the universal ribosomal protein uL15 family. In terms of assembly, part of the 50S ribosomal subunit.

Binds to the 23S rRNA. The protein is Large ribosomal subunit protein uL15 of Polaromonas naphthalenivorans (strain CJ2).